Here is a 37-residue protein sequence, read N- to C-terminus: Large ribosomal subunit protein bL36 (37 aa).

It belongs to the bacterial ribosomal protein bL36 family.

The sequence is that of Large ribosomal subunit protein bL36 from Mycoplasmopsis synoviae (strain 53) (Mycoplasma synoviae).